The sequence spans 233 residues: MVKYLNQKEAINVDLELFNEYKFSVDQLMELAGLSCAHAITKCFPADRFGRVLVCCGPGNNGGDGLVCARHLALMGYTPAIYYPKPTAKPLFENLSHQCQRMEICRIDECPTVETSANSYDLIVDALFGFSFKPPVRVDFVPVVELLQQTKLPIASVDIPSGWDVENGKLNDCDLEPTLLISLTAPKLCAKHFKGKHHFLGGRFVPPALQRKYELNLPEYPGNELCLELETHK.

The region spanning A10–L217 is the YjeF N-terminal domain. Residue N60–D64 participates in (6S)-NADPHX binding. Residues N61 and D125 each contribute to the K(+) site. (6S)-NADPHX-binding positions include G129 to P135 and D158. S161 provides a ligand contact to K(+).

It belongs to the NnrE/AIBP family. K(+) serves as cofactor.

The catalysed reaction is (6R)-NADHX = (6S)-NADHX. It carries out the reaction (6R)-NADPHX = (6S)-NADPHX. Functionally, catalyzes the epimerization of the S- and R-forms of NAD(P)HX, a damaged form of NAD(P)H that is a result of enzymatic or heat-dependent hydration. This is a prerequisite for the S-specific NAD(P)H-hydrate dehydratase to allow the repair of both epimers of NAD(P)HX. The sequence is that of NAD(P)H-hydrate epimerase from Drosophila grimshawi (Hawaiian fruit fly).